A 342-amino-acid chain; its full sequence is A-type ATP synthase subunit C (342 aa).

This sequence belongs to the V-ATPase V0D/AC39 subunit family. Has multiple subunits with at least A(3), B(3), C, D, E, F, H, I and proteolipid K(x).

It localises to the cell membrane. In terms of biological role, component of the A-type ATP synthase that produces ATP from ADP in the presence of a proton gradient across the membrane. This chain is A-type ATP synthase subunit C, found in Archaeoglobus fulgidus (strain ATCC 49558 / DSM 4304 / JCM 9628 / NBRC 100126 / VC-16).